The sequence spans 236 residues: 1-(5-phosphoribosyl)-5-[(5-phosphoribosylamino)methylideneamino] imidazole-4-carboxamide isomerase (236 aa).

Residue Asp8 is the Proton acceptor of the active site. Asp129 acts as the Proton donor in catalysis.

Belongs to the HisA/HisF family.

It localises to the cytoplasm. The catalysed reaction is 1-(5-phospho-beta-D-ribosyl)-5-[(5-phospho-beta-D-ribosylamino)methylideneamino]imidazole-4-carboxamide = 5-[(5-phospho-1-deoxy-D-ribulos-1-ylimino)methylamino]-1-(5-phospho-beta-D-ribosyl)imidazole-4-carboxamide. Its pathway is amino-acid biosynthesis; L-histidine biosynthesis; L-histidine from 5-phospho-alpha-D-ribose 1-diphosphate: step 4/9. This is 1-(5-phosphoribosyl)-5-[(5-phosphoribosylamino)methylideneamino] imidazole-4-carboxamide isomerase from Ruminiclostridium cellulolyticum (strain ATCC 35319 / DSM 5812 / JCM 6584 / H10) (Clostridium cellulolyticum).